Consider the following 291-residue polypeptide: Small ribosomal subunit protein uS2 (291 aa).

Positions 241–270 are disordered; the sequence is KREPRQINRPVMSSENQAEQQTSVANENVQ. Over residues 251–270 the composition is skewed to polar residues; it reads VMSSENQAEQQTSVANENVQ.

Belongs to the universal ribosomal protein uS2 family.

The sequence is that of Small ribosomal subunit protein uS2 from Mycoplasma capricolum subsp. capricolum (strain California kid / ATCC 27343 / NCTC 10154).